Here is a 188-residue protein sequence, read N- to C-terminus: Peptidyl-prolyl cis-trans isomerase H (188 aa).

A2 is subject to N-acetylalanine. Residues 14 to 176 (FFDVSIGGQE…WTHSLTCPAL (163 aa)) enclose the PPIase cyclophilin-type domain.

It belongs to the cyclophilin-type PPIase family. PPIase H subfamily. In terms of assembly, interacts directly with PRPF4. Part of a heteromeric complex containing PPIH, PRPF3 and PRPF4 that is stable in the absence of RNA. Component of the U4/U6-U5 tri-snRNP complex composed of the U4, U6 and U5 snRNAs and at least PRPF3, PRPF4, PRPF6, PRPF8, PRPF31, SNRNP200, TXNL4A, SNRNP40, DDX23, CD2BP2, PPIH, SNU13, EFTUD2, SART1 and USP39. Heterodimer with PRPF18. Heterodimer with PRPF18.

The protein localises to the nucleus speckle. It is found in the cytoplasm. The enzyme catalyses [protein]-peptidylproline (omega=180) = [protein]-peptidylproline (omega=0). With respect to regulation, inhibited by cyclosporin A. PPIase that catalyzes the cis-trans isomerization of proline imidic peptide bonds in oligopeptides and may therefore assist protein folding. Participates in pre-mRNA splicing. May play a role in the assembly of the U4/U5/U6 tri-snRNP complex, one of the building blocks of the spliceosome. May act as a chaperone. The polypeptide is Peptidyl-prolyl cis-trans isomerase H (Ppih) (Mus musculus (Mouse)).